Here is a 1035-residue protein sequence, read N- to C-terminus: Potassium-transporting ATPase alpha chain 1 (1035 aa).

A disordered region spans residues 1–41; it reads MGKADNYELYSVELGPGPGGDMAAKMSKKKKAGGGGGKRKE. Residues 1-98 are Cytoplasmic-facing; it reads MGKADNYELY…NALRPPRGTP (98 aa). Residues Tyr-7 and Tyr-10 each carry the phosphotyrosine modification. The segment covering 26 to 40 has biased composition (basic residues); the sequence is MSKKKKAGGGGGKRK. Phosphoserine is present on Ser-27. Residues 99–119 traverse the membrane as a helical segment; the sequence is EYVKFARQLAGGLQCLMWVAA. At 120–142 the chain is on the lumenal side; sequence AICLIAFAIQASEGDLTTDDNLY. A helical transmembrane segment spans residues 143-163; the sequence is LALALIAVVVVTGCFGYYQEF. The Cytoplasmic portion of the chain corresponds to 164–299; sequence KSTNIIASFK…NEKTPIAIEI (136 aa). A helical transmembrane segment spans residues 300–319; that stretch reads EHFVDIIAGLAILFGATFFV. Topologically, residues 320 to 331 are lumenal; that stretch reads VAMCIGYTFLRA. The helical transmembrane segment at 332–349 threads the bilayer; that stretch reads MVFFMAIVVAYVPEGLLA. Residues Val-340, Ala-341, Val-343, and Glu-345 each contribute to the K(+) site. At 350-783 the chain is on the cytoplasmic side; sequence TVTVCLSLTA…EQGRLIFDNL (434 aa). Residue Asp-387 is the 4-aspartylphosphate intermediate of the active site. Residues Asp-387 and Thr-389 each coordinate Mg(2+). A phosphoserine mark is found at Ser-463 and Ser-601. 2 residues coordinate Mg(2+): Asp-728 and Asp-732. Residues 784-803 traverse the membrane as a helical segment; that stretch reads KKSIAYTLTKNIPELTPYLI. Glu-797 contributes to the K(+) binding site. The Lumenal segment spans residues 804–813; it reads YITVSVPLPL. Residues 814 to 834 form a helical membrane-spanning segment; that stretch reads GCITILFIELCTDIFPSVSLA. Residue Glu-822 participates in K(+) binding. Over 835–854 the chain is Cytoplasmic; sequence YEKAESDIMHLRPRNPKRDR. Position 840 is a phosphoserine (Ser-840). The helical transmembrane segment at 855–877 threads the bilayer; the sequence is LVNEPLAAYSYFQIGAIQSFAGF. Over 878–929 the chain is Lumenal; it reads TDYFTAMAQEGWFPLLCVGLRPQWEDHHLQDLQDSYGQEWTFGQRLYQQYTC. Residues 930–949 traverse the membrane as a helical segment; it reads YTVFFISIEMCQIADVLIRK. The Cytoplasmic segment spans residues 950–963; that stretch reads TRRLSAFQQGFFRN. Ser-954 is subject to Phosphoserine; by PKA. A helical transmembrane segment spans residues 964 to 982; it reads RILVIAIVFQVCIGCFLCY. The Lumenal portion of the chain corresponds to 983 to 997; it reads CPGMPNIFNFMPIRF. Residues 998-1018 form a helical membrane-spanning segment; the sequence is QWWLVPMPFGLLIFVYDEIRK. Over 1019-1035 the chain is Cytoplasmic; the sequence is LGVRCCPGSWWDQELYY.

Belongs to the cation transport ATPase (P-type) (TC 3.A.3) family. Type IIC subfamily. As to quaternary structure, the gastric H(+)/K(+) ATPase pump is composed of the catalytic alpha subunit ATP4A and the regulatory beta subunit ATP4B. Interacts (via the P-domain) with ATP4B (via N-terminus); this interaction stabilizes the lumenal-open E2 conformation state and prevents the reverse reaction of the transport cycle.

The protein localises to the apical cell membrane. The protein resides in the cell membrane. The enzyme catalyses K(+)(out) + ATP + H2O + H(+)(in) = K(+)(in) + ADP + phosphate + 2 H(+)(out). Its function is as follows. The catalytic subunit of the gastric H(+)/K(+) ATPase pump which transports H(+) ions in exchange for K(+) ions across the apical membrane of parietal cells. Uses ATP as an energy source to pump H(+) ions to the gastric lumen while transporting K(+) ion from the lumen into the cell. Remarkably generates a million-fold proton gradient across the gastric parietal cell membrane, acidifying the gastric juice down to pH 1. Within a transport cycle, the transfer of a H(+) ion across the membrane is coupled to ATP hydrolysis and is associated with a transient phosphorylation that shifts the pump conformation from inward-facing (E1) to outward-facing state (E2). The release of the H(+) ion in the stomach lumen is followed by binding of K(+) ion converting the pump conformation back to the E1 state. In Oryctolagus cuniculus (Rabbit), this protein is Potassium-transporting ATPase alpha chain 1 (ATP4A).